The chain runs to 580 residues: Alpha-glucosidase (580 aa).

A signal peptide spans 1-19; sequence MRPLGALSLFALLATTVSG. N-linked (GlcNAc...) asparagine glycosylation is found at asparagine 102 and asparagine 127. The active-site Nucleophile is aspartate 224. Catalysis depends on glutamate 290, which acts as the Proton donor. N-linked (GlcNAc...) asparagine glycosylation occurs at asparagine 501. A helical transmembrane segment spans residues 560–580; it reads AAAINLSIGLLLAIMARYIFV.

Belongs to the glycosyl hydrolase 13 family. As to quaternary structure, (Microbial infection) Binds to L.sphaericus BinB subunit of the binary toxin BinAB. As to expression, in 4th-instar larvae produced in the brush border membranes of the gastric caeca and the posterior stomach cells (at protein level).

The protein resides in the membrane. It catalyses the reaction Hydrolysis of terminal, non-reducing (1-&gt;4)-linked alpha-D-glucose residues with release of alpha-D-glucose.. Functionally, probably an alpha-glucosidase, it has no alpha-amylase function. (Microbial infection) Serves as the larval receptor for Lysinibacillus sphaericus BinB toxin. The protein is Alpha-glucosidase of Culex pipiens (House mosquito).